The sequence spans 668 residues: Beta-galactosidase (668 aa).

Positions 1-24 are cleaved as a signal peptide; that stretch reads MARPAAVRVLWALLLPLLLGSARG. Positions 25–29 are excised as a propeptide; sequence LRNAS. The substrate site is built by tyrosine 84, glutamate 130, and asparagine 188. The active-site Proton donor is the glutamate 189. Residues cysteine 196 and cysteine 231 are joined by a disulfide bond. N-linked (GlcNAc...) asparagine glycosylation occurs at asparagine 248. The active-site Nucleophile is the glutamate 269. Tyrosine 334 serves as a coordination point for substrate. Asparagine 465, asparagine 499, asparagine 546, and asparagine 556 each carry an N-linked (GlcNAc...) asparagine glycan. Cysteine 627 and cysteine 635 are joined by a disulfide.

The protein belongs to the glycosyl hydrolase 35 family. Homodimer. May form higher multimers.

The protein resides in the lysosome. The enzyme catalyses Hydrolysis of terminal non-reducing beta-D-galactose residues in beta-D-galactosides.. In terms of biological role, cleaves beta-linked terminal galactosyl residues from gangliosides, glycoproteins, and glycosaminoglycans. The sequence is that of Beta-galactosidase (GLB1) from Canis lupus familiaris (Dog).